We begin with the raw amino-acid sequence, 65 residues long: pH-response transcription factor pacC/RIM101 (65 aa).

The segment at 16–40 adopts a C2H2-type 1 zinc-finger fold; it reads LTCQWNSCRTTTVKRDHITSHIRVH. Residues 46–65 form a C2H2-type 2; degenerate zinc finger; that stretch reads HKCEFCGKSFKRPQDLKKHV.

The protein belongs to the pacC/RIM101 family.

Its subcellular location is the nucleus. Transcription factor that mediates regulation of both acid- and alkaline-expressed genes in response to ambient pH. At alkaline ambient pH, activates transcription of alkaline-expressed genes (including pac1 itself) and represses transcription of acid-expressed genes. The chain is pH-response transcription factor pacC/RIM101 (pac1) from Colletotrichum gloeosporioides (Anthracnose fungus).